A 303-amino-acid chain; its full sequence is uncharacterized protein (303 aa).

A run of 6 helical transmembrane segments spans residues 12–32 (GLPIGSPMYAHLLAGAFSGIL), 81–101 (ISSVIMGAGPSHAIYFSVLEF), 117–137 (ALAGACAITISDAFMTPFDVI), 174–194 (CIAMSIPFTAIQVATYDTCMS), 208–228 (IISGGLSGAIASSLTTPLDVV), and 265–286 (FFKGIRPRMVVAMPATAVSWAA). 3 Solcar repeats span residues 17–105 (SPMY…FKSK), 111–195 (DRPL…CMSF), and 206–293 (SHII…GKEI).

Belongs to the mitochondrial carrier (TC 2.A.29) family.

It localises to the mitochondrion inner membrane. This is an uncharacterized protein from Schizosaccharomyces pombe (strain 972 / ATCC 24843) (Fission yeast).